We begin with the raw amino-acid sequence, 632 residues long: MPYPFSISPHDMEEHLVQEDKGPVLRFITCGSVDDGKSTLIGRLLCDAQLVFEDQLADLRHGGIRGGNGEEIDFSLVLDGLEAEREQGITIDVAYRYFSTSKRKFIVADTPGHFEYTRNMATGASTADLAVILVDSRQGILQQTRRHSYLASLLGIRHVVLAVNKIDLIDFSEPIFDAIVAEYVRFSAKLGFASVMAIPMSARFGDNVVSKSGKLPWYQGSPLLEYLETVELDAPDRQEPFRFPVQLVMRPNADFRGYAGRIASGKIAVGDPVIVAKSGLRSSVRAIIAPDGNQISAAEGEPVTLVLADEVDVSRGDMLVDPASRPFVSDQFQAHLIWFDANPMLPGRSYLLRTETDSVSATVTVLKHQLNVDSFVREPAKLLQMNEVGVCNIMTQRPIVFDAYKENRSTGNFIIVDRVSSATVGAGMIDFPLRRADNVHWQALDVDKAARSALKNQKPAVLWLTGLSGSGKSTIANALEALLHTCGKHTYLLDGDNVRHGLNRDLGFTAVDRVENIRRVAEVAKLMADAGLIVICSFISPFRDERRMARELMGEGEFIEIFVDTPLDECARRDPKGLYKKAFAGNIANFTGVSSPYEAPENPELHLKTMGQEPARLALQIEEFLRSRMEEK.

The tract at residues 1 to 457 (MPYPFSISPH…KAARSALKNQ (457 aa)) is sulfate adenylyltransferase. The tr-type G domain maps to 22–236 (GPVLRFITCG…LETVELDAPD (215 aa)). Residues 31–38 (GSVDDGKS) are G1. A GTP-binding site is contributed by 31 to 38 (GSVDDGKS). The segment at 88–92 (GITID) is G2. Residues 109–112 (DTPG) form a G3 region. GTP contacts are provided by residues 109–113 (DTPGH) and 164–167 (NKID). A G4 region spans residues 164–167 (NKID). Residues 187–189 (SAK) form a G5 region. The adenylyl-sulfate kinase stretch occupies residues 458–632 (KPAVLWLTGL…EFLRSRMEEK (175 aa)). 466–473 (GLSGSGKS) serves as a coordination point for ATP. Catalysis depends on Ser-540, which acts as the Phosphoserine intermediate.

In the C-terminal section; belongs to the APS kinase family. This sequence in the N-terminal section; belongs to the TRAFAC class translation factor GTPase superfamily. Classic translation factor GTPase family. CysN/NodQ subfamily. In terms of assembly, sulfate-activating enzymes, NodP and NodQ, may be physically associated.

The catalysed reaction is sulfate + ATP + H(+) = adenosine 5'-phosphosulfate + diphosphate. It catalyses the reaction adenosine 5'-phosphosulfate + ATP = 3'-phosphoadenylyl sulfate + ADP + H(+). In terms of biological role, proposed to provide activated sulfate for transfer to Nod factor. ATP sulfurylase may be the GTPase, regulating ATP sulfurylase activity. APS kinase catalyzes the synthesis of activated sulfate. The chain is Bifunctional enzyme NodQ (nodQ) from Rhizobium tropici.